Reading from the N-terminus, the 123-residue chain is Kininogen (123 aa).

Bradykinin is released from kininogen by kallikrein. In terms of processing, N-glycosylated. Contains sulfated N-acetylglucosamine and O-acetylated sialic acids as terminal elements on biantennary and triantennary N-glycans.

Inhibits papain and ficin (cysteine proteinases) but not trypsin (a serine proteinase). This is Kininogen from Gadus morhua (Atlantic cod).